The chain runs to 353 residues: Terpene synthase 3 (353 aa).

3 residues coordinate Mg(2+): aspartate 118, asparagine 261, and glutamate 269. The D(D/E)XX(D/E) motif signature appears at 118–122 (DDLLE). An NSE motif motif is present at residues 261–269 (NDTFLLKKE). Residues 342–349 (WCSKTTRY) carry the WxxxxxRY motif motif.

This sequence belongs to the terpene synthase family. The cofactor is Mg(2+).

Terpene synthase that may be involved in the production of volatile terpenoids. Does not show detectable terpene products with either farnesyl diphosphate (FPP) or geranyl diphosphate (GPP). P.polycephalum has a unique biology and these volatile terpenoids could function in internal communication of P.polycephalum, to mark the territory that have been explored, or they may be involved in chemotaxis. In Physarum polycephalum (Slime mold), this protein is Terpene synthase 3.